Here is a 655-residue protein sequence, read N- to C-terminus: Proprotein convertase subtilisin/kexin type 4 (655 aa).

An N-terminal signal peptide occupies residues 1-26 (MRPSQTELWLGLTLTLALLAVRWASA). Residues 27–110 (QAPIYVSSWA…QQTLRRRVKR (84 aa)) constitute a propeptide that is removed on maturation. The Peptidase S8 domain occupies 123 to 437 (QWYMNKEIQQ…YGLLDAGLLV (315 aa)). Active-site charge relay system residues include Asp155, His196, and Ser370. Residues 446-580 (TKPQKKCAIR…TLLLYGTAED (135 aa)) form the P/Homo B domain. The N-linked (GlcNAc...) asparagine glycan is linked to Asn472.

The protein belongs to the peptidase S8 family. Furin subfamily. As to quaternary structure, the proPCSK4 form interacts with HSPA5; the interaction takes place at the endoplasmic reticulum. In terms of processing, N-glycosylated. Synthesized in the endoplasmic reticulum as a zymogen, is matured by autocatalytic cleavage between the prodomain and the catalytic domain. Expressed abundantly in the testis since postnatal Day 16. In testis, strongly detected in round and elongated spermatids as well as spermatocytes. Also observed in residual bodies engulfed by Sertoli cells at spermatogenic stages VIII and IX. In ovaries, expressed in macrophage-like cells of the ovarian theca, interstitium and corpora lutea.

It is found in the cytoplasmic vesicle. The protein localises to the secretory vesicle. Its subcellular location is the acrosome membrane. Proprotein convertase involved in the processing of hormone and other protein precursors at sites comprised of pairs of basic amino acid residues. In males, important for ADAM2 processing as well as other acrosomal proteins with roles in fertilization and critical for normal fertilization events such as sperm capacitation, acrosome reaction and binding of sperm to zona pellucida. Also plays a role in female fertility, involved in the regulation of trophoblast migration and placental development, may be through the proteolytical processing and activation of proteins such as IGF2. May also participate in folliculogenesis in the ovaries. The protein is Proprotein convertase subtilisin/kexin type 4 (Pcsk4) of Mus musculus (Mouse).